Reading from the N-terminus, the 85-residue chain is Antitoxin VapB4 (85 aa).

It belongs to the phD/YefM antitoxin family. Interacts with cognate toxin VapC4.

In terms of biological role, antitoxin component of a type II toxin-antitoxin (TA) system. Antitoxin that counteracts the effect of the VapC4 toxin. The polypeptide is Antitoxin VapB4 (vapB4) (Mycobacterium tuberculosis (strain CDC 1551 / Oshkosh)).